Reading from the N-terminus, the 504-residue chain is MEFRLPSLPVFLSFLLFFLMLVRHWKRSKGQGKPPPGPKPLPILGNLHQLADGLPHYAVTKLCRKYGPVMKLKLGQLDAVVVSSPEAAKEVLKTNEIKFAQRPEVYAVEIMSYDHSSIVFSPYGDYWREMRKISVLELLSNRRVTSFRSIREDEVWNLVQFISENEGCIINLSERIFTMTNDIISRAAFGNKCDDQHNFTALLEEILQIGAGFAIADLYPSLTFLRPLTGMKPALERIHKKMDKILEEIVTEHQIKRKAAAKNNTEFEEEDLVDTLLNYAEANKNEFHLTTDQVKAVTLDIFSAGSETSATSMEWAMSELLKNPRVMKKAQEEVRQACKGKSKIREADIQNLEYLKLVIKETFRLHAPGPFTPREARETCEIGGYTIPAKAKILINLHAMGRDPTIWKDPECFQPERFEGSSIDFKGNHFELIPFGGGRRICPGISFATANIELGLAQMMYHFDFKLPNGKSLEDLDMDENFGMTCRRKENLQVIATTRIPFEK.

A helical transmembrane segment spans residues 2 to 22; that stretch reads EFRLPSLPVFLSFLLFFLMLV. Residue cysteine 442 coordinates heme.

It belongs to the cytochrome P450 family. Requires heme as cofactor. As to expression, mainly expressed in fruits and leaves.

The protein resides in the membrane. It catalyses the reaction dihydroniloticin + 2 reduced [NADPH--hemoprotein reductase] + 2 O2 = melianol + 2 oxidized [NADPH--hemoprotein reductase] + 3 H2O + 2 H(+). The protein operates within secondary metabolite biosynthesis; terpenoid biosynthesis. Functionally, monooxygenase involved in the biosynthesis of limonoids triterpene natural products such as azadirachtin, an antifeedant widely used as bioinsecticide, and possessing many medicinal applications including anti-tumoral, anti-malarial, anti-rheumatic, antibacterial, anti-inflammatory, anti-pyretic and diuretic effects. Catalyzes the conversion of dihydroniloticin to the protolimonoid melianol. This chain is Melianol synthase CYP71BQ5, found in Azadirachta indica (Neem tree).